We begin with the raw amino-acid sequence, 571 residues long: Septation ring formation regulator EzrA (571 aa).

Topologically, residues methionine 1–tyrosine 3 are extracellular. A helical transmembrane segment spans residues methionine 4 to leucine 22. Residues lysine 23–glutamate 571 are Cytoplasmic-facing. 4 coiled-coil regions span residues leucine 248 to glutamate 298, aspartate 326 to glutamate 374, lysine 400 to arginine 437, and arginine 478 to phenylalanine 529.

This sequence belongs to the EzrA family.

The protein resides in the cell membrane. In terms of biological role, negative regulator of FtsZ ring formation; modulates the frequency and position of FtsZ ring formation. Inhibits FtsZ ring formation at polar sites. Interacts either with FtsZ or with one of its binding partners to promote depolymerization. In Listeria monocytogenes serovar 1/2a (strain ATCC BAA-679 / EGD-e), this protein is Septation ring formation regulator EzrA.